Here is a 340-residue protein sequence, read N- to C-terminus: Anthranilate phosphoribosyltransferase (340 aa).

5-phospho-alpha-D-ribose 1-diphosphate contacts are provided by residues Gly-81, 84 to 85 (GD), Thr-89, 91 to 94 (NIST), 109 to 117 (KHGNRGATS), and Ser-121. Gly-81 provides a ligand contact to anthranilate. Ser-93 lines the Mg(2+) pocket. Asn-112 lines the anthranilate pocket. Anthranilate is bound at residue Arg-167. 2 residues coordinate Mg(2+): Asp-225 and Glu-226.

It belongs to the anthranilate phosphoribosyltransferase family. Homodimer. Requires Mg(2+) as cofactor.

It catalyses the reaction N-(5-phospho-beta-D-ribosyl)anthranilate + diphosphate = 5-phospho-alpha-D-ribose 1-diphosphate + anthranilate. Its pathway is amino-acid biosynthesis; L-tryptophan biosynthesis; L-tryptophan from chorismate: step 2/5. In terms of biological role, catalyzes the transfer of the phosphoribosyl group of 5-phosphorylribose-1-pyrophosphate (PRPP) to anthranilate to yield N-(5'-phosphoribosyl)-anthranilate (PRA). This chain is Anthranilate phosphoribosyltransferase, found in Methanocorpusculum labreanum (strain ATCC 43576 / DSM 4855 / Z).